Consider the following 133-residue polypeptide: Small ribosomal subunit protein uS11 (133 aa).

A disordered region spans residues 114–133 (VTPIPHDGTRPPGGKRGRRV).

This sequence belongs to the universal ribosomal protein uS11 family. Part of the 30S ribosomal subunit.

Located on the platform of the 30S subunit. This chain is Small ribosomal subunit protein uS11, found in Archaeoglobus fulgidus (strain ATCC 49558 / DSM 4304 / JCM 9628 / NBRC 100126 / VC-16).